The sequence spans 338 residues: 3 beta-hydroxysteroid dehydrogenase type 7 (338 aa).

Tyr159 acts as the Proton acceptor in catalysis. Lys163 contributes to the NAD(+) binding site. 2 consecutive transmembrane segments (helical) span residues 258-278 and 280-300; these read LLPY…QWLL and PLVL…NTTF.

Belongs to the 3-beta-HSD family. In terms of tissue distribution, high levels in liver and lung, moderate levels in spleen, brain, heart, kidney, jejunum and testis. Up-regulated in 3Y1 cells upon growth arrest.

The protein resides in the endoplasmic reticulum membrane. It carries out the reaction 7alpha-hydroxycholesterol + NAD(+) = 7alpha-hydroxycholest-4-en-3-one + NADH + H(+). It catalyses the reaction 7alpha,25-dihydroxycholesterol + NAD(+) = 7alpha,25-dihydroxy-4-cholesten-3-one + NADH + H(+). The catalysed reaction is (25R)-cholest-5-en-3beta,7alpha,26-triol + NAD(+) = (25R)-7alpha,26-dihydroxycholest-4-en-3-one + NADH + H(+). The enzyme catalyses (24S)-7alpha-dihydroxycholesterol + NAD(+) = (24S)-7alpha,24-dihydroxycholest-4-en-3-one + NADH + H(+). It functions in the pathway lipid metabolism; steroid biosynthesis. Functionally, the 3-beta-HSD enzymatic system plays a crucial role in the biosynthesis of all classes of hormonal steroids. HSD VII is active against four 7-alpha-hydroxylated sterols. Does not metabolize several different C(19/21) steroids as substrates. Involved in bile acid synthesis. Plays a key role in cell positioning and movement in lymphoid tissues by mediating degradation of 7-alpha,25-dihydroxycholesterol (7-alpha,25-OHC): 7-alpha,25-OHC acts as a ligand for the G protein-coupled receptor GPR183/EBI2, a chemotactic receptor for a number of lymphoid cells. In Rattus norvegicus (Rat), this protein is 3 beta-hydroxysteroid dehydrogenase type 7.